We begin with the raw amino-acid sequence, 397 residues long: Major outer membrane porin, serovar L3 (397 aa).

An N-terminal signal peptide occupies residues 1–22 (MKKLLKSVLVFAALSSASSLQA).

This sequence belongs to the chlamydial porin (CP) (TC 1.B.2) family. In terms of assembly, part of a disulfide cross-linked outer membrane complex (COMC) composed of the major outer membrane porin (MOMP), the small cysteine-rich protein (OmcA) and the large cysteine-rich periplasmic protein (OmcB).

The protein resides in the cell outer membrane. In elementary bodies (EBs, the infectious stage, which is able to survive outside the host cell) provides the structural integrity of the outer envelope through disulfide cross-links with the small cysteine-rich protein and the large cysteine-rich periplasmic protein. It has been described in publications as the Sarkosyl-insoluble COMC (Chlamydia outer membrane complex), and serves as the functional equivalent of peptidoglycan. In terms of biological role, permits diffusion of specific solutes through the outer membrane. The chain is Major outer membrane porin, serovar L3 (ompA) from Chlamydia trachomatis.